The sequence spans 240 residues: Rho GDP-dissociation inhibitor 1 (240 aa).

The tract at residues 1 to 66 (MSLVSGARDM…DDDSKLQLGP (66 aa)) is disordered.

The protein belongs to the Rho GDI family. Interacts with RAC-like GTP binding proteins ARAC5/ROP4 and ARAC3/ROP6.

It is found in the cytoplasm. Functionally, regulates the GDP/GTP exchange reaction of the Rho proteins by inhibiting the dissociation of GDP from them, and the subsequent binding of GTP to them. The sequence is that of Rho GDP-dissociation inhibitor 1 (GDI1) from Arabidopsis thaliana (Mouse-ear cress).